Reading from the N-terminus, the 263-residue chain is Glucosamine-6-phosphate deaminase 2 (263 aa).

Residue Asp82 is the Proton acceptor; for enolization step of the active site. The active-site For ring-opening step is Asn151. His153 functions as the Proton acceptor; for ring-opening step in the catalytic mechanism. The For ring-opening step role is filled by Glu158.

Belongs to the glucosamine/galactosamine-6-phosphate isomerase family. As to quaternary structure, homohexamer.

It carries out the reaction alpha-D-glucosamine 6-phosphate + H2O = beta-D-fructose 6-phosphate + NH4(+). Its function is as follows. Catalyzes the reversible conversion of alpha-D-glucosamine 6-phosphate (GlcN-6P) into beta-D-fructose 6-phosphate (Fru-6P) and ammonium ion, a regulatory reaction step in de novo uridine diphosphate-N-acetyl-alpha-D-glucosamine (UDP-GlcNAc) biosynthesis via hexosamine pathway. The chain is Glucosamine-6-phosphate deaminase 2 (GPI2) from Giardia intestinalis (Giardia lamblia).